Here is a 274-residue protein sequence, read N- to C-terminus: Uridine-5'-phosphate dioxygenase (274 aa).

Fe cation is bound by residues His-103, Asp-105, and His-246.

Requires Fe(2+) as cofactor.

The enzyme catalyses UMP + 2-oxoglutarate + O2 = uridine-5'-aldehyde + succinate + phosphate + CO2. Its pathway is antibiotic biosynthesis. Its activity is regulated as follows. Inhibited by several divalent cations, including Zn(2+). Its function is as follows. Dioxygenase involved in the biosynthesis of the lipopeptidyl nucleoside antibiotic A-90289. Catalyzes the dephosphorylation and oxidation of UMP to generate uridine-5'-aldehyde, the first intermediate in the biosynthesis of A-90289. The polypeptide is Uridine-5'-phosphate dioxygenase (Streptomyces sp).